A 465-amino-acid polypeptide reads, in one-letter code: UDP-N-acetylmuramate--L-alanine ligase (465 aa).

115 to 121 contacts ATP; the sequence is GAHGKTT.

It belongs to the MurCDEF family.

Its subcellular location is the cytoplasm. The catalysed reaction is UDP-N-acetyl-alpha-D-muramate + L-alanine + ATP = UDP-N-acetyl-alpha-D-muramoyl-L-alanine + ADP + phosphate + H(+). Its pathway is cell wall biogenesis; peptidoglycan biosynthesis. Its function is as follows. Cell wall formation. The protein is UDP-N-acetylmuramate--L-alanine ligase of Coxiella burnetii (strain Dugway 5J108-111).